The primary structure comprises 220 residues: GTP cyclohydrolase 1 (220 aa).

Positions 110, 113, and 181 each coordinate Zn(2+).

The protein belongs to the GTP cyclohydrolase I family. As to quaternary structure, toroid-shaped homodecamer, composed of two pentamers of five dimers.

The catalysed reaction is GTP + H2O = 7,8-dihydroneopterin 3'-triphosphate + formate + H(+). Its pathway is cofactor biosynthesis; 7,8-dihydroneopterin triphosphate biosynthesis; 7,8-dihydroneopterin triphosphate from GTP: step 1/1. The protein is GTP cyclohydrolase 1 of Baumannia cicadellinicola subsp. Homalodisca coagulata.